The primary structure comprises 380 residues: tRNA (guanine(26)-N(2))-dimethyltransferase (380 aa).

In terms of domain architecture, Trm1 methyltransferase spans 2-374 (ITVNEGSVTI…AGIGEIEEVL (373 aa)). The S-adenosyl-L-methionine site is built by Arg-35, Arg-65, Asp-83, Asp-109, and Ala-110. Residues Cys-242, Cys-245, Cys-261, and Cys-264 each contribute to the Zn(2+) site.

The protein belongs to the class I-like SAM-binding methyltransferase superfamily. Trm1 family.

The enzyme catalyses guanosine(26) in tRNA + 2 S-adenosyl-L-methionine = N(2)-dimethylguanosine(26) in tRNA + 2 S-adenosyl-L-homocysteine + 2 H(+). Functionally, dimethylates a single guanine residue at position 26 of a number of tRNAs using S-adenosyl-L-methionine as donor of the methyl groups. This chain is tRNA (guanine(26)-N(2))-dimethyltransferase, found in Methanothermobacter thermautotrophicus (strain ATCC 29096 / DSM 1053 / JCM 10044 / NBRC 100330 / Delta H) (Methanobacterium thermoautotrophicum).